A 197-amino-acid polypeptide reads, in one-letter code: Imidazoleglycerol-phosphate dehydratase (197 aa).

The protein belongs to the imidazoleglycerol-phosphate dehydratase family.

The protein localises to the cytoplasm. The enzyme catalyses D-erythro-1-(imidazol-4-yl)glycerol 3-phosphate = 3-(imidazol-4-yl)-2-oxopropyl phosphate + H2O. It functions in the pathway amino-acid biosynthesis; L-histidine biosynthesis; L-histidine from 5-phospho-alpha-D-ribose 1-diphosphate: step 6/9. The protein is Imidazoleglycerol-phosphate dehydratase of Rhodopseudomonas palustris (strain HaA2).